Here is a 225-residue protein sequence, read N- to C-terminus: Uracil-DNA glycosylase (225 aa).

Catalysis depends on Asp-65, which acts as the Proton acceptor.

The protein belongs to the uracil-DNA glycosylase (UDG) superfamily. UNG family.

It is found in the cytoplasm. It catalyses the reaction Hydrolyzes single-stranded DNA or mismatched double-stranded DNA and polynucleotides, releasing free uracil.. Its function is as follows. Excises uracil residues from the DNA which can arise as a result of misincorporation of dUMP residues by DNA polymerase or due to deamination of cytosine. In Bacillus cereus (strain B4264), this protein is Uracil-DNA glycosylase.